A 260-amino-acid polypeptide reads, in one-letter code: Tryptophan synthase alpha chain (260 aa).

Residues E52 and D63 each act as proton acceptor in the active site.

The protein belongs to the TrpA family. In terms of assembly, tetramer of two alpha and two beta chains.

The catalysed reaction is (1S,2R)-1-C-(indol-3-yl)glycerol 3-phosphate + L-serine = D-glyceraldehyde 3-phosphate + L-tryptophan + H2O. The protein operates within amino-acid biosynthesis; L-tryptophan biosynthesis; L-tryptophan from chorismate: step 5/5. Functionally, the alpha subunit is responsible for the aldol cleavage of indoleglycerol phosphate to indole and glyceraldehyde 3-phosphate. This chain is Tryptophan synthase alpha chain, found in Streptococcus mutans serotype c (strain ATCC 700610 / UA159).